The primary structure comprises 345 residues: Methylthioribose-1-phosphate isomerase (345 aa).

Substrate-binding positions include 44–46, arginine 86, and glutamine 194; that span reads RGA. The Proton donor role is filled by aspartate 235. 245–246 is a binding site for substrate; that stretch reads NK.

It belongs to the eIF-2B alpha/beta/delta subunits family. MtnA subfamily.

The enzyme catalyses 5-(methylsulfanyl)-alpha-D-ribose 1-phosphate = 5-(methylsulfanyl)-D-ribulose 1-phosphate. It participates in amino-acid biosynthesis; L-methionine biosynthesis via salvage pathway; L-methionine from S-methyl-5-thio-alpha-D-ribose 1-phosphate: step 1/6. Catalyzes the interconversion of methylthioribose-1-phosphate (MTR-1-P) into methylthioribulose-1-phosphate (MTRu-1-P). The protein is Methylthioribose-1-phosphate isomerase of Desulfitobacterium hafniense (strain DSM 10664 / DCB-2).